A 312-amino-acid chain; its full sequence is Putative B3 domain-containing protein Os10g0537100 (312 aa).

A DNA-binding region (TF-B3) is located at residues 35 to 153 (FEKVVTPSDV…RLFIDFRRRR (119 aa)). Disordered stretches follow at residues 161–182 (FPPT…HPPL) and 286–312 (LLQL…DLGL). Residues 170–180 (HSHHHHQRHHP) show a composition bias toward basic residues. The segment covering 286-301 (LLQLPSPSSSTSSSTA) has biased composition (low complexity).

The protein localises to the nucleus. This chain is Putative B3 domain-containing protein Os10g0537100, found in Oryza sativa subsp. japonica (Rice).